A 165-amino-acid chain; its full sequence is Protoporphyrinogen IX oxidase (165 aa).

Transmembrane regions (helical) follow at residues 26 to 46, 77 to 97, 99 to 119, and 145 to 165; these read LHVISVLAWMAGLFYLPRLFV, AMIATWIFGLLLVFTPGIVDW, MLWPWTKAACVLAMTGFHMWL, and PTLLMLVIVFSAVAKWNYWGF. Histidine 27 provides a ligand contact to heme. Lysine 105 lines the heme pocket.

The protein belongs to the HemJ family. Homodimer. It depends on heme b as a cofactor.

It localises to the cell membrane. It carries out the reaction protoporphyrinogen IX + 3 A = protoporphyrin IX + 3 AH2. The protein operates within porphyrin-containing compound metabolism; protoporphyrin-IX biosynthesis; protoporphyrin-IX from protoporphyrinogen-IX: step 1/1. Its function is as follows. Catalyzes the oxidation of protoporphyrinogen IX to protoporphyrin IX. Is involved in the biosynthesis of tetrapyrrole molecules like heme and chlorophyll. Does not use oxygen or artificial electron acceptors such as menadione or benzoquinone. This is Protoporphyrinogen IX oxidase from Cereibacter sphaeroides (strain ATCC 17023 / DSM 158 / JCM 6121 / CCUG 31486 / LMG 2827 / NBRC 12203 / NCIMB 8253 / ATH 2.4.1.) (Rhodobacter sphaeroides).